The sequence spans 201 residues: Lipopolysaccharide core heptose(II)-phosphate phosphatase (201 aa).

A signal peptide spans 1 to 35 (MLAFTLRFIKNKRYLATLAGALVIIAGLTSQHAWS).

Belongs to the phosphoglycerate mutase family. Ais subfamily.

It is found in the periplasm. Its pathway is bacterial outer membrane biogenesis; lipopolysaccharide metabolism. Functionally, catalyzes the dephosphorylation of heptose(II) of the outer membrane lipopolysaccharide core. This is Lipopolysaccharide core heptose(II)-phosphate phosphatase from Salmonella paratyphi A (strain AKU_12601).